Consider the following 250-residue polypeptide: Hydroxyethylthiazole kinase (250 aa).

Met-39 lines the substrate pocket. 2 residues coordinate ATP: Arg-114 and Thr-159. Gly-186 contributes to the substrate binding site.

This sequence belongs to the Thz kinase family. Requires Mg(2+) as cofactor.

It catalyses the reaction 5-(2-hydroxyethyl)-4-methylthiazole + ATP = 4-methyl-5-(2-phosphooxyethyl)-thiazole + ADP + H(+). The protein operates within cofactor biosynthesis; thiamine diphosphate biosynthesis; 4-methyl-5-(2-phosphoethyl)-thiazole from 5-(2-hydroxyethyl)-4-methylthiazole: step 1/1. Catalyzes the phosphorylation of the hydroxyl group of 4-methyl-5-beta-hydroxyethylthiazole (THZ). The polypeptide is Hydroxyethylthiazole kinase (Lactococcus lactis subsp. cremoris (strain SK11)).